A 470-amino-acid polypeptide reads, in one-letter code: Sorting nexin-17 (470 aa).

The region spanning 1–109 is the PX domain; sequence MHFSIPETES…SFLRRAQQET (109 aa). Positions 36, 38, 62, and 75 each coordinate a 1,2-diacyl-sn-glycero-3-phospho-(1D-myo-inositol-3-phosphate). The Ras-associating domain maps to 115-206; it reads EEVSLEVLLS…YKIVLRKSYW (92 aa). An FERM-like region spans residues 115–432; that stretch reads EEVSLEVLLS…DATRESMVKL (318 aa). Residues 270-432 are PTB-like F3 module; the sequence is GYLRFDACVA…DATRESMVKL (163 aa). 7 positions are modified to phosphoserine: S336, S407, S409, S415, S421, S437, and S440. Residues 400 to 425 form a disordered region; that stretch reads VGGTLRRSDSQQAVKSPPLLESPDAT.

Belongs to the sorting nexin family. As to quaternary structure, monomer. Interacts with APP (via cytoplasmic YXNPXY motif). Interacts with KIF1B. Interacts with the C-termini of P-selectin, PTC, LDLR, VLDLR, LRP1 and LRP8. Interacts with KRIT1 (via N-terminus). Interacts with HRAS. Interacts with ITGB1 and ITGB5 (via NPxY motif). Interacts with CCDC22 and CCDC93; the interaction associates SNX17 with the CCC complex. Interacts (via C-terminus) with VPS26C and VPS35L; the interactions are direct and associate SNX17 with the retriever complex.

It localises to the cytoplasm. The protein resides in the early endosome. It is found in the cytoplasmic vesicle membrane. Its function is as follows. Critical regulator of endosomal recycling of numerous surface proteins, including integrins, signaling receptor and channels. Binds to NPxY sequences in the cytoplasmic tails of target cargos. Associates with retriever and CCC complexes to prevent lysosomal degradation and promote cell surface recycling of numerous cargos such as integrins ITGB1, ITGB5 and their associated alpha subunits. Also required for maintenance of normal cell surface levels of APP and LRP1. Interacts with membranes containing phosphatidylinositol 3-phosphate (PtdIns(3P)). In Pongo abelii (Sumatran orangutan), this protein is Sorting nexin-17 (SNX17).